Consider the following 247-residue polypeptide: Nodulation protein H (247 aa).

Positions 1 to 17 are hydrophobic; sequence MTHSTLPPQPFAILAMP.

Functionally, required for the formation of sulfated nod factor. Proposed to transfer activated sulfate (PAPS) to a N-acetylglucosamine of the nod factor. The chain is Nodulation protein H (nodH) from Rhizobium meliloti (strain 1021) (Ensifer meliloti).